A 465-amino-acid chain; its full sequence is GTPase Der (465 aa).

EngA-type G domains follow at residues Pro-3–Gly-167 and Val-179–Thr-352. GTP contacts are provided by residues Gly-9–Ser-16, Asp-57–Ile-61, Asn-119–Asp-122, Gly-185–Ser-192, Asp-232–Leu-236, and Asn-297–Asp-300. The KH-like domain occupies His-353–Ala-437.

It belongs to the TRAFAC class TrmE-Era-EngA-EngB-Septin-like GTPase superfamily. EngA (Der) GTPase family. Associates with the 50S ribosomal subunit.

In terms of biological role, GTPase that plays an essential role in the late steps of ribosome biogenesis. The sequence is that of GTPase Der from Xanthomonas axonopodis pv. citri (strain 306).